We begin with the raw amino-acid sequence, 716 residues long: ATP-dependent zinc metalloprotease FTSH 1, chloroplastic (716 aa).

The transit peptide at 1–48 directs the protein to the chloroplast; sequence MASNSLLRSSSNFFLGSHIIISSPTPKTTRKPSFPFSFVSRAKYQITR. Residues 49-86 constitute a thylakoid transit peptide; sequence SSQDENSPNGKPNSPFSSQVALAAILLSSISSSPLALA. A helical membrane pass occupies residues 204 to 224; that stretch reads FTVIGNLIFPLLAFGGLFLLF. Residue 302 to 309 coordinates ATP; that stretch reads GPPGTGKT. H524 contacts Zn(2+). Residue E525 is part of the active site. Residues H528 and D605 each coordinate Zn(2+).

It in the N-terminal section; belongs to the AAA ATPase family. The protein in the C-terminal section; belongs to the peptidase M41 family. Interacts with CHIP and HSP70. Heterohexamers with FTSH2, FTSH5 and FTSH8. Zn(2+) is required as a cofactor. Post-translationally, the FTSH1 precursor is ubiquitinated by CHIP in the cytoplasm. Ubiquitous.

It localises to the plastid. It is found in the chloroplast thylakoid membrane. In terms of biological role, part of a complex that function as an ATP-dependent zinc metallopeptidase. Involved in the thylakoid formation and in the removal of damaged D1 in the photosystem II, preventing cell death under high-intensity light conditions. In Arabidopsis thaliana (Mouse-ear cress), this protein is ATP-dependent zinc metalloprotease FTSH 1, chloroplastic (FTSH1).